A 361-amino-acid polypeptide reads, in one-letter code: Histidinol-phosphate aminotransferase (361 aa).

Position 216 is an N6-(pyridoxal phosphate)lysine (lysine 216).

This sequence belongs to the class-II pyridoxal-phosphate-dependent aminotransferase family. Histidinol-phosphate aminotransferase subfamily. As to quaternary structure, homodimer. Pyridoxal 5'-phosphate serves as cofactor.

It carries out the reaction L-histidinol phosphate + 2-oxoglutarate = 3-(imidazol-4-yl)-2-oxopropyl phosphate + L-glutamate. Its pathway is amino-acid biosynthesis; L-histidine biosynthesis; L-histidine from 5-phospho-alpha-D-ribose 1-diphosphate: step 7/9. This Francisella philomiragia subsp. philomiragia (strain ATCC 25017 / CCUG 19701 / FSC 153 / O#319-036) protein is Histidinol-phosphate aminotransferase.